The primary structure comprises 523 residues: Putative F-box protein At1g30925 (523 aa).

Residues Phe-4 to Leu-44 form the F-box domain.

In Arabidopsis thaliana (Mouse-ear cress), this protein is Putative F-box protein At1g30925.